A 175-amino-acid chain; its full sequence is Clathrin-associated protein AP-3 complex component APS3 (175 aa).

It belongs to the adaptor complexes small subunit family. Adaptor protein complex 3 (AP-3) is a heterotetramer composed of 2 large adaptins, a medium adaptin and a small adaptin.

It localises to the golgi apparatus. The protein resides in the cytoplasmic vesicle membrane. Part of the AP-3 complex, an adapter-related complex which is not clathrin-associated. The complex is associated with the Golgi region as well as more peripheral structures. It facilitates the budding of vesicles from the Golgi membrane. Involved in vacuolar trafficking and contributes to hyphal growth and pathogenesis. This is Clathrin-associated protein AP-3 complex component APS3 (APS3) from Candida albicans (strain SC5314 / ATCC MYA-2876) (Yeast).